We begin with the raw amino-acid sequence, 107 residues long: Thioredoxin (107 aa).

The Thioredoxin domain occupies S2 to A107. Residues C34 and C37 each act as nucleophile in the active site. C34 and C37 are oxidised to a cystine.

Belongs to the thioredoxin family.

Its function is as follows. Participates in various redox reactions through the reversible oxidation of its active center dithiol to a disulfide and catalyzes dithiol-disulfide exchange reactions. The protein is Thioredoxin (TRX) of Echinococcus granulosus (Hydatid tapeworm).